The following is a 427-amino-acid chain: Sperm-associated antigen 1A (427 aa).

The tract at residues 46 to 113 (QKKGPGYREG…GPGSAGESCN (68 aa)) is disordered. TPR repeat units lie at residues 125–158 (LARL…CIEA), 167–200 (CVLY…HPFS), 202–234 (KPLL…DISV), 302–335 (FTIL…KPNE), 336–369 (CAIY…EPKN), and 371–403 (KAFY…DPNV).

It is found in the cytoplasm. It localises to the dynein axonemal particle. In terms of biological role, may play a role in the cytoplasmic assembly and/or trafficking of the axonemal dynein arms. This chain is Sperm-associated antigen 1A (spag1a), found in Danio rerio (Zebrafish).